Consider the following 1728-residue polypeptide: Lysophospholipase NTE1 (1728 aa).

Topologically, residues 1–44 (MDSSSIAHESDIVSTERNILPERFISNKQQGNYLEDGSGDGNGK) are cytoplasmic. A helical transmembrane segment spans residues 45–65 (AAEHWLLAAIFNFFWVISYFI). Residues 66–97 (SGSTHIAFRSSWYIVSLLLLKFPKWIIVEANH) lie on the Lumenal side of the membrane. Residues 98–118 (IHLTIPFSVLVVTLAIIFYVS) form a helical membrane-spanning segment. Over 119 to 1728 (YEFLKGRLLS…GFFLHRRNSI (1610 aa)) the chain is Cytoplasmic. Over residues 141-150 (SLNSKNSKSS) the composition is skewed to low complexity. Disordered regions lie at residues 141–167 (SLNS…RRRR), 285–368 (RKKK…DEST), 406–436 (NDNV…LSTS), 454–488 (TEAS…VTTP), 596–660 (NLQK…TGSR), and 687–756 (ASPS…FTSF). Positions 153–162 (LHHDSKDSNT) are enriched in basic and acidic residues. 2 stretches are compositionally biased toward polar residues: residues 293–303 (SRHGQYNNNSD) and 326–336 (MRSSSRNQNIP). Over residues 345–367 (SSDEESDINDGDSESQSESDDES) the composition is skewed to acidic residues. 3 stretches are compositionally biased toward polar residues: residues 406–424 (NDNV…NYTN), 454–479 (TEAS…SKSI), and 599–609 (KGFQSPTSSRL). Residues 610 to 628 (TSNFNGNSNNQRTNSRNSQ) are compositionally biased toward low complexity. 2 stretches are compositionally biased toward polar residues: residues 642–657 (ELSQ…TPIT) and 729–756 (IYNN…FTSF). A nucleoside 3',5'-cyclic phosphate-binding positions include 854-987 (SPTL…LTSL) and 983-1121 (SLTS…VAKK). The disordered stretch occupies residues 1034-1055 (PELEENSTDYPNDGEEKDSSRD). A compositionally biased stretch (acidic residues) spans 1036–1049 (LEENSTDYPNDGEE). In terms of domain architecture, PNPLA spans 1422-1586 (LVLGGGGARG…VDNLPVLEMK (165 aa)). Residues 1426–1431 (GGGARG) carry the GXGXXG motif. Positions 1453 to 1457 (GTSIG) match the GXSXG motif. The active-site Nucleophile is the Ser1455. Asp1573 serves as the catalytic Proton acceptor. The DGA/G motif lies at 1573–1575 (DGG).

This sequence belongs to the NTE family.

The protein localises to the endoplasmic reticulum membrane. The catalysed reaction is a 1-acyl-sn-glycero-3-phosphocholine + H2O = sn-glycerol 3-phosphocholine + a fatty acid + H(+). With respect to regulation, inhibited by organophosphorus esters. Intracellular phospholipase B that catalyzes the double deacylation of phosphatidylcholine (PC) to glycerophosphocholine (GroPCho). Plays an important role in membrane lipid homeostasis. Responsible for the rapid PC turnover in response to inositol, elevated temperatures, or when choline is present in the growth medium. This chain is Lysophospholipase NTE1 (NTE1), found in Candida glabrata (strain ATCC 2001 / BCRC 20586 / JCM 3761 / NBRC 0622 / NRRL Y-65 / CBS 138) (Yeast).